The chain runs to 721 residues: Glucans biosynthesis glucosyltransferase H (721 aa).

6 consecutive transmembrane segments (helical) span residues 53–75 (VLIM…QVLQ), 85–107 (VVLV…ALAG), 404–426 (GIGA…LISL), 456–478 (WVFA…LVLI), 490–512 (LRTF…VMMV), and 567–589 (WPLL…VALL).

This sequence belongs to the glycosyltransferase 2 family. OpgH subfamily.

It is found in the cell inner membrane. The protein operates within glycan metabolism; osmoregulated periplasmic glucan (OPG) biosynthesis. In terms of biological role, involved in the biosynthesis of osmoregulated periplasmic glucans (OPGs). The polypeptide is Glucans biosynthesis glucosyltransferase H (Rhodopseudomonas palustris (strain ATCC BAA-98 / CGA009)).